We begin with the raw amino-acid sequence, 392 residues long: Copper-containing nitrite reductase (392 aa).

An N-terminal signal peptide occupies residues 1–18; it reads MKRQALAAMIASLFALAA. Cys19 carries N-palmitoyl cysteine lipidation. Cys19 carries S-diacylglycerol cysteine lipidation. Positions 30–49 are disordered; sequence ETPAASAEAASSAAQATAET. Plastocyanin-like domains follow at residues 101-195 and 245-346; these read WTFD…ILVE and GHVG…LKVE. Cu cation-binding residues include His134, His139, His174, Cys175, His183, and Met188. Substrate is bound at residue His139. His280 is a binding site for substrate. Residue His329 coordinates Cu cation. The disordered stretch occupies residues 367–392; the sequence is GAASAPAASAPAASAPAASASEKSVY. 4 consecutive repeat copies span residues 368 to 372, 373 to 377, 378 to 382, and 383 to 387. Positions 368–387 are 4 X 5 AA tandem repeats of A-A-S-A-P; that stretch reads AASAPAASAPAASAPAASAS.

Belongs to the multicopper oxidase family. As to quaternary structure, homotrimer. The cofactor is Cu(+). It depends on Cu(2+) as a cofactor. Post-translationally, palmitoylated.

The protein localises to the cell outer membrane. It carries out the reaction nitric oxide + Fe(III)-[cytochrome c] + H2O = Fe(II)-[cytochrome c] + nitrite + 2 H(+). In terms of biological role, catalyzes the reduction of nitrite to nitric oxide (NO), probably with azurin as electron donor. Essential for growth and survival in oxygen-depleted environments. Can also provide protection against killing by normal human sera. This chain is Copper-containing nitrite reductase (aniA), found in Neisseria gonorrhoeae.